A 383-amino-acid chain; its full sequence is MSKKRSIFEEVSEAQPKAQPVQPGVIDRAARTGARGAVRVWLMMLFGLVVIMIAVGGLTRLTDSGLSITEWAPIAGAIPPLSAEDWAREFDLYRAIPEYQLQNKGMTLAEFQFIYWWEWGHRQLGRVIGLVWALGFFGFLVTRKIPPGWTGRLFLLGVLGGLQGAIGWWMVASGLTGTMLDVASYRLATHLGLAFFILGLIAWYIMVLGRPERDLLQARRSGEAGLVTGANWLMGLAAVQILLGALVAGIDAGRTYTDWPLMAGGFLPLNMWELEPIWRNFFEDPGLVQFNHRMVGYLLLLVGLYVWWRSRRSAHVTTKRAFDWVAVILFGQMVLGIVTVLNAAPWTWAIAHQFGAVVTICLILRARFRARYPVATSLRGAVA.

The next 8 membrane-spanning stretches (helical) occupy residues 38–58 (VRVW…VGGL), 127–147 (VIGL…KIPP), 153–173 (LFLL…MVAS), 187–207 (LATH…YIMV), 230–250 (ANWL…VAGI), 287–307 (LVQF…LYVW), 321–341 (AFDW…VTVL), and 344–364 (APWT…CLIL). Residue His-292 participates in heme binding. Residue His-352 participates in heme binding.

The protein belongs to the COX15/CtaA family. Type 2 subfamily. In terms of assembly, interacts with CtaB. The cofactor is heme b.

The protein resides in the cell membrane. It carries out the reaction Fe(II)-heme o + 2 A + H2O = Fe(II)-heme a + 2 AH2. It functions in the pathway porphyrin-containing compound metabolism; heme A biosynthesis; heme A from heme O: step 1/1. Functionally, catalyzes the conversion of heme O to heme A by two successive hydroxylations of the methyl group at C8. The first hydroxylation forms heme I, the second hydroxylation results in an unstable dihydroxymethyl group, which spontaneously dehydrates, resulting in the formyl group of heme A. The sequence is that of Heme A synthase from Dinoroseobacter shibae (strain DSM 16493 / NCIMB 14021 / DFL 12).